The chain runs to 382 residues: Lipid-A-disaccharide synthase (382 aa).

It belongs to the LpxB family.

The catalysed reaction is 2-N,3-O-bis[(3R)-3-hydroxytetradecanoyl]-alpha-D-glucosaminyl 1-phosphate + UDP-2-N,3-O-bis[(3R)-3-hydroxytetradecanoyl]-alpha-D-glucosamine = lipid A disaccharide (E. coli) + UDP + H(+). It carries out the reaction a lipid X + a UDP-2-N,3-O-bis[(3R)-3-hydroxyacyl]-alpha-D-glucosamine = a lipid A disaccharide + UDP + H(+). It functions in the pathway glycolipid biosynthesis; lipid IV(A) biosynthesis; lipid IV(A) from (3R)-3-hydroxytetradecanoyl-[acyl-carrier-protein] and UDP-N-acetyl-alpha-D-glucosamine: step 5/6. Condensation of UDP-2,3-diacylglucosamine and 2,3-diacylglucosamine-1-phosphate to form lipid A disaccharide, a precursor of lipid A, a phosphorylated glycolipid that anchors the lipopolysaccharide to the outer membrane of the cell. The polypeptide is Lipid-A-disaccharide synthase (Escherichia coli (strain 55989 / EAEC)).